The sequence spans 191 residues: Large ribosomal subunit protein uL5 (191 aa).

This sequence belongs to the universal ribosomal protein uL5 family. Part of the 50S ribosomal subunit; part of the 5S rRNA/L5/L18/L25 subcomplex. Contacts the 5S rRNA and the P site tRNA. Forms a bridge to the 30S subunit in the 70S ribosome.

Its function is as follows. This is one of the proteins that bind and probably mediate the attachment of the 5S RNA into the large ribosomal subunit, where it forms part of the central protuberance. In the 70S ribosome it contacts protein S13 of the 30S subunit (bridge B1b), connecting the 2 subunits; this bridge is implicated in subunit movement. Contacts the P site tRNA; the 5S rRNA and some of its associated proteins might help stabilize positioning of ribosome-bound tRNAs. The sequence is that of Large ribosomal subunit protein uL5 from Salinibacter ruber (strain DSM 13855 / M31).